We begin with the raw amino-acid sequence, 658 residues long: Glycogen debranching enzyme (658 aa).

Catalysis depends on Asp-335, which acts as the Nucleophile. The Proton donor role is filled by Glu-370.

Belongs to the glycosyl hydrolase 13 family.

The catalysed reaction is Hydrolysis of (1-&gt;6)-alpha-D-glucosidic linkages to branches with degrees of polymerization of three or four glucose residues in limit dextrin.. The protein operates within glycan degradation; glycogen degradation. Functionally, removes maltotriose and maltotetraose chains that are attached by 1,6-alpha-linkage to the limit dextrin main chain, generating a debranched limit dextrin. This Erwinia tasmaniensis (strain DSM 17950 / CFBP 7177 / CIP 109463 / NCPPB 4357 / Et1/99) protein is Glycogen debranching enzyme.